The primary structure comprises 242 residues: tRNA (guanine-N(1)-)-methyltransferase (242 aa).

Residues G115 and 134–139 each bind S-adenosyl-L-methionine; that span reads LGDFVL. Positions 210–224 are enriched in basic and acidic residues; that stretch reads QEQREQRTAARRPDL. The tract at residues 210–242 is disordered; the sequence is QEQREQRTAARRPDLMQRWQQRFGADNDSEHRA.

This sequence belongs to the RNA methyltransferase TrmD family. Homodimer.

The protein resides in the cytoplasm. The enzyme catalyses guanosine(37) in tRNA + S-adenosyl-L-methionine = N(1)-methylguanosine(37) in tRNA + S-adenosyl-L-homocysteine + H(+). Functionally, specifically methylates guanosine-37 in various tRNAs. This chain is tRNA (guanine-N(1)-)-methyltransferase, found in Synechococcus sp. (strain WH7803).